Here is a 109-residue protein sequence, read N- to C-terminus: Flagellar hook-basal body complex protein FliE (109 aa).

This sequence belongs to the FliE family.

The protein localises to the bacterial flagellum basal body. The protein is Flagellar hook-basal body complex protein FliE of Pseudomonas syringae pv. tomato (strain ATCC BAA-871 / DC3000).